The sequence spans 443 residues: tRNA modification GTPase MnmE (443 aa).

3 residues coordinate (6S)-5-formyl-5,6,7,8-tetrahydrofolate: Arg23, Glu82, and Lys121. One can recognise a TrmE-type G domain in the interval 215 to 364 (GTSIVLAGHP…LKQFIQQWMQ (150 aa)). Asn225 lines the K(+) pocket. GTP is bound by residues 225-230 (NAGKSS), 244-250 (TDIPGTT), and 269-272 (DSAG). Residue Ser229 participates in Mg(2+) binding. K(+) is bound by residues Thr244, Ile246, and Thr249. A Mg(2+)-binding site is contributed by Thr250. Lys443 provides a ligand contact to (6S)-5-formyl-5,6,7,8-tetrahydrofolate.

It belongs to the TRAFAC class TrmE-Era-EngA-EngB-Septin-like GTPase superfamily. TrmE GTPase family. In terms of assembly, homodimer. Heterotetramer of two MnmE and two MnmG subunits. It depends on K(+) as a cofactor.

It localises to the cytoplasm. Functionally, exhibits a very high intrinsic GTPase hydrolysis rate. Involved in the addition of a carboxymethylaminomethyl (cmnm) group at the wobble position (U34) of certain tRNAs, forming tRNA-cmnm(5)s(2)U34. This chain is tRNA modification GTPase MnmE, found in Chlamydia abortus (strain DSM 27085 / S26/3) (Chlamydophila abortus).